Here is a 186-residue protein sequence, read N- to C-terminus: Ribosome maturation factor RimM (186 aa).

Residues proline 103 to leucine 174 form the PRC barrel domain.

It belongs to the RimM family. In terms of assembly, binds ribosomal protein uS19.

The protein localises to the cytoplasm. An accessory protein needed during the final step in the assembly of 30S ribosomal subunit, possibly for assembly of the head region. Essential for efficient processing of 16S rRNA. May be needed both before and after RbfA during the maturation of 16S rRNA. It has affinity for free ribosomal 30S subunits but not for 70S ribosomes. The chain is Ribosome maturation factor RimM from Synechococcus sp. (strain JA-3-3Ab) (Cyanobacteria bacterium Yellowstone A-Prime).